The following is a 174-amino-acid chain: Secreted protein A (174 aa).

The signal sequence occupies residues 1-19; the sequence is MRLLITLFAIFALFNCSLA. The N-linked (GlcNAc...) asparagine glycan is linked to asparagine 156.

The protein belongs to the Sct family. Post-translationally, probably contains disulfide bonds.

The protein localises to the secreted. It is found in the extracellular vesicle. In Dictyostelium discoideum (Social amoeba), this protein is Secreted protein A (p17).